The primary structure comprises 363 residues: Spermidine/putrescine import ATP-binding protein PotA (363 aa).

An ABC transporter domain is found at 4 to 234; the sequence is LELRNVIRRF…PANRFIADFI (231 aa). 36–43 provides a ligand contact to ATP; it reads GPSGCGKT.

It belongs to the ABC transporter superfamily. Spermidine/putrescine importer (TC 3.A.1.11.1) family. As to quaternary structure, the complex is composed of two ATP-binding proteins (PotA), two transmembrane proteins (PotB and PotC) and a solute-binding protein (PotD).

The protein localises to the cell inner membrane. It catalyses the reaction ATP + H2O + polyamine-[polyamine-binding protein]Side 1 = ADP + phosphate + polyamineSide 2 + [polyamine-binding protein]Side 1.. In terms of biological role, part of the ABC transporter complex PotABCD involved in spermidine/putrescine import. Responsible for energy coupling to the transport system. The chain is Spermidine/putrescine import ATP-binding protein PotA from Nitrosomonas eutropha (strain DSM 101675 / C91 / Nm57).